Consider the following 101-residue polypeptide: Small ribosomal subunit protein uS10 (101 aa).

The protein belongs to the universal ribosomal protein uS10 family. In terms of assembly, part of the 30S ribosomal subunit.

Its function is as follows. Involved in the binding of tRNA to the ribosomes. The polypeptide is Small ribosomal subunit protein uS10 (Anaeromyxobacter dehalogenans (strain 2CP-C)).